The following is a 500-amino-acid chain: MAEIHDITGLLKPYLSGTNLVWTLLLVGYIIPKLFQYLQRLFSPVSRIPGSWLHKLTSLPLKIAIAKGESHIFTVDLHKKYGPIVTLSPTMISISDAREIKRIVHTEDWAKSEAVYGNFRQDPQRPTLLAFTDKKAYSQRKRLVSSMFGLRYIRSMQPLMRNCISVLMDELDKQCANGATAVDMQHMIQSLAADIIGVTTFGQTFDLVKNGSHPLPDRLKQALKLSGILQFMPWLTKIPFIPNRDPYVSWFTNEIVAKRRAQIASRQGPPREDLLQKMIEAADESPTSPFRVSDIQDESVVLLIAGSETTANAELFTLIHLLRHPSKLATLYEEIDRWYPRNDPRPTDCDYSMSGMVYLQACIDETMRLVPGQATGSPRESRKDETLLGYDIPKGTTVFPTTQEVHLDETLWPNATEFLPERWLDVYAKGEANSLPYYPFSAGSRVCIGKHFAAQEMHLSLVSLLRRFQFEYVSGQDESTVFRIAQQMRGHRYLMTVGRR.

Residues 13-32 (PYLSGTNLVWTLLLVGYIIP) traverse the membrane as a helical segment. 2 N-linked (GlcNAc...) asparagine glycosylation sites follow: Asn-210 and Asn-414. Position 447 (Cys-447) interacts with heme.

It belongs to the cytochrome P450 family. The cofactor is heme.

It localises to the membrane. It functions in the pathway secondary metabolite biosynthesis. Its function is as follows. Cytochrome P450 monooxygenase; part of the cluster that mediates the biosynthesis of acurin A, a highly reduced polyketide coupled to a serine via a peptide bond. The activities of the highly reducing polyketide synthase acrA and the nonribosomal peptide synthetase acrB are collectively responsible for the synthesis of the acurin A core structure with a heptaketide backbone produced by acrA covalently fused to a L-serine by acrB. After the formation of the PK-NRP hybrid product, it is detached from acrB by reductive release to set up the formation of the lactam ring by aldol condensation. The hydrolyase acrC then catalyzes water loss to generate a double bond in the ring. This double bond is probably reduced, which is followed by three oxidations at C-22 to generate the carboxylic acid moiety, involving probably the FAD-binding monooxygenase acrE and the cytochrome P450 monooxygenases acrD and acrF. Finally, a last methylation step performed by the O-methyltransferase acrG leads to the production of acurin A. The sequence is that of Cytochrome P450 monooxygenase acrD from Aspergillus aculeatus (strain ATCC 16872 / CBS 172.66 / WB 5094).